Consider the following 399-residue polypeptide: MEKKKEEDHHHQQQQQQQKEIKNTETKIEQEQEQEQKQEISQASSSSNMANLVTSSDHHPLELAGNLSSIFDTSSLPFPYSYFEDHSSNNPNSFLDLLRQDHQFASSSNSSSFSFDAFPLPNNNNNTSFFTDLPLPQAESSEVVNTTPTSPNSTSVSSSSNEAANDNNSGKEVTVKDQEEGDQQQEQKGTKPQLKAKKKNQKKAREARFAFLTKSDIDNLDDGYRWRKYGQKAVKNSPYPRSYYRCTTVGCGVKKRVERSSDDPSIVMTTYEGQHTHPFPMTPRGHIGMLTSPILDHGATTASSSSFSIPQPRYLLTQHHQPYNMYNNNSLSMINRRSSDGTFVNPGPSSSFPGFGYDMSQASTSTSSSIRDHGLLQDILPSQIRSDTINTQTNEENKK.

Basic and acidic residues-rich tracts occupy residues 1 to 11 (MEKKKEEDHHH) and 19 to 38 (KEIK…EQKQ). 2 disordered regions span residues 1–57 (MEKK…TSSD) and 138–202 (AESS…KNQK). Positions 143-161 (VVNTTPTSPNSTSVSSSSN) are enriched in low complexity. The segment covering 162–171 (EAANDNNSGK) has biased composition (polar residues). Over residues 184–193 (QQEQKGTKPQ) the composition is skewed to low complexity. The WRKY DNA-binding region spans 215-280 (SDIDNLDDGY…YEGQHTHPFP (66 aa)). The disordered stretch occupies residues 361–399 (QASTSTSSSIRDHGLLQDILPSQIRSDTINTQTNEENKK). Residues 383 to 399 (QIRSDTINTQTNEENKK) are compositionally biased toward polar residues.

It localises to the nucleus. In terms of biological role, transcription factor. Interacts specifically with the W box (5'-(T)TGAC[CT]-3'), a frequently occurring elicitor-responsive cis-acting element. The polypeptide is Probable WRKY transcription factor 48 (WRKY48) (Arabidopsis thaliana (Mouse-ear cress)).